Here is a 61-residue protein sequence, read N- to C-terminus: Potassium channel toxin alpha-KTx 3.18 (61 aa).

Residues 1 to 23 form the signal peptide; sequence MKMFFTVLVTLFVCSMIIGICEG. Disulfide bonds link Cys30/Cys50, Cys36/Cys55, and Cys40/Cys57. Position 60 is a lysine amide (Lys60).

In terms of tissue distribution, expressed by the venom gland.

It localises to the secreted. Its function is as follows. Inhibits voltage-gated potassium channel rKv1.1/KCNA1 at nanomolar ranges (IC(50)=90 +-2 nM, reduction of current by 30% at 50 nM or toxin). This Mesobuthus eupeus (Lesser Asian scorpion) protein is Potassium channel toxin alpha-KTx 3.18.